Consider the following 391-residue polypeptide: Na(+)/H(+) antiporter NhaA (391 aa).

11 consecutive transmembrane segments (helical) span residues 14 to 34 (AGGILLMAAVILAMIMANSPL), 59 to 79 (LIHWINDGLMALFFMLIGLEV), 95 to 115 (SLPTFAAIGGMIFPAAIYLIF), 124 to 144 (VGWAIPAATDIAFALGIMALL), 154 to 174 (VFLLALAIIDDLGVVVIIAMF), 177 to 197 (TDLSAISLVVAALAIVILVGL), 213 to 233 (LILWIAVLKSGVHATLAGVII), 261 to 281 (FVILPIFAFANAGVDLSGMSL), 292 to 312 (IALGLLLGKPLGVLLFSFVAV), 331 to 351 (VAVMCGIGFTMSMFISSLAFI), and 363 to 383 (LGILTGSIMSAVIGYFWLSKV).

It belongs to the NhaA Na(+)/H(+) (TC 2.A.33) antiporter family.

The protein localises to the cell inner membrane. It carries out the reaction Na(+)(in) + 2 H(+)(out) = Na(+)(out) + 2 H(+)(in). Functionally, na(+)/H(+) antiporter that extrudes sodium in exchange for external protons. In Shewanella loihica (strain ATCC BAA-1088 / PV-4), this protein is Na(+)/H(+) antiporter NhaA.